The primary structure comprises 282 residues: 2-dehydro-3-deoxyphosphooctonate aldolase (282 aa).

This sequence belongs to the KdsA family.

It localises to the cytoplasm. The enzyme catalyses D-arabinose 5-phosphate + phosphoenolpyruvate + H2O = 3-deoxy-alpha-D-manno-2-octulosonate-8-phosphate + phosphate. Its pathway is carbohydrate biosynthesis; 3-deoxy-D-manno-octulosonate biosynthesis; 3-deoxy-D-manno-octulosonate from D-ribulose 5-phosphate: step 2/3. It functions in the pathway bacterial outer membrane biogenesis; lipopolysaccharide biosynthesis. The polypeptide is 2-dehydro-3-deoxyphosphooctonate aldolase (Shewanella sp. (strain W3-18-1)).